The following is a 149-amino-acid chain: Calmodulin (149 aa).

At A2 the chain carries N-acetylalanine. EF-hand domains follow at residues 8-43 (EQIS…LGQN), 44-79 (PTEA…KLKD), 81-116 (DTEE…LGEK), and 117-149 (LTNE…MIAK). The Ca(2+) site is built by D21, D23, D25, T27, E32, D57, D59, N61, T63, E68, D94, D96, D98, Y100, E105, D130, D132, D134, Q136, and E141.

Belongs to the calmodulin family.

Its subcellular location is the cytoplasm. Functionally, calmodulin mediates the control of a large number of enzymes, ion channels and other proteins by Ca(2+). Among the enzymes to be stimulated by the calmodulin-Ca(2+) complex are a number of protein kinases and phosphatases. This chain is Calmodulin, found in Plasmodium falciparum (isolate 3D7).